A 137-amino-acid chain; its full sequence is Large ribosomal subunit protein uL16 (137 aa).

It belongs to the universal ribosomal protein uL16 family. As to quaternary structure, part of the 50S ribosomal subunit.

Its function is as follows. Binds 23S rRNA and is also seen to make contacts with the A and possibly P site tRNAs. This Streptococcus thermophilus (strain ATCC BAA-491 / LMD-9) protein is Large ribosomal subunit protein uL16.